Reading from the N-terminus, the 767-residue chain is Transferrin receptor protein 1 (767 aa).

The Cytoplasmic portion of the chain corresponds to 1 to 67; sequence MDQARSAFSN…LTKPKRFNGS (67 aa). 2 positions are modified to phosphoserine: Ser9 and Ser18. Position 19 is a phosphotyrosine (Tyr19). An Endocytosis signal motif is present at residues 19–22; sequence YTRF. Phosphothreonine is present on Thr20. The residue at position 23 (Ser23) is a Phosphoserine. A Stop-transfer sequence motif is present at residues 60-63; the sequence is KPKR. Residues 68–88 form a helical; Signal-anchor for type II membrane protein membrane-spanning segment; the sequence is FCYAVIAVIIFFLIGFMIGYL. Cys69 carries the S-palmitoyl cysteine lipid modification. The Extracellular segment spans residues 89–767; it reads GYCKRVEPKS…GDIWDIDNEF (679 aa). The span at 96-110 shows a compositional bias: basic and acidic residues; that stretch reads PKSECGRSGDSKEIE. Residues 96–122 are disordered; it reads PKSECGRSGDSKEIEGTEPPETEEYFP. Positions 111–121 are enriched in acidic residues; it reads GTEPPETEEYF. N-linked (GlcNAc...) asparagine glycans are attached at residues Asn211, Asn258, and Asn324. The region spanning 230–320 is the PA domain; the sequence is SKATTVTGKL…GTGDPYTPGF (91 aa). The interval 576-767 is ligand-binding; it reads TMDTYEVLSQ…GDIWDIDNEF (192 aa). A Cell attachment site motif is present at residues 653-655; it reads RGD. An N-linked (GlcNAc...) asparagine glycan is attached at Asn734.

It belongs to the peptidase M28 family. M28B subfamily. In terms of assembly, homodimer; disulfide-linked. Binds one transferrin or HFE molecule per subunit. Interacts with SH3BP4. Interacts with STEAP3; facilitates TFRC endocytosis in erythroid precursor cells. Stearoylated by ZDHHC6 which inhibits TFRC-mediated activation of the JNK pathway and promotes mitochondrial fragmentation. Stearoylation does not affect iron uptake.

The protein resides in the cell membrane. Its subcellular location is the melanosome. In terms of biological role, cellular uptake of iron occurs via receptor-mediated endocytosis of ligand-occupied transferrin receptor into specialized endosomes. Endosomal acidification leads to iron release. The apotransferrin-receptor complex is then recycled to the cell surface with a return to neutral pH and the concomitant loss of affinity of apotransferrin for its receptor. Transferrin receptor is necessary for development of erythrocytes and the nervous system. Positively regulates T and B cell proliferation through iron uptake. Acts as a lipid sensor that regulates mitochondrial fusion by regulating activation of the JNK pathway. When dietary levels of stearate (C18:0) are low, promotes activation of the JNK pathway, resulting in HUWE1-mediated ubiquitination and subsequent degradation of the mitofusin MFN2 and inhibition of mitochondrial fusion. When dietary levels of stearate (C18:0) are high, TFRC stearoylation inhibits activation of the JNK pathway and thus degradation of the mitofusin MFN2. Mediates uptake of NICOL1 into fibroblasts where it may regulate extracellular matrix production. This chain is Transferrin receptor protein 1 (TFRC), found in Equus caballus (Horse).